Reading from the N-terminus, the 350-residue chain is Putative [LysW]-lysine/[LysW]-ornithine hydrolase (350 aa).

His72 is a binding site for Zn(2+). Asp74 is a catalytic residue. Asp96 serves as a coordination point for Zn(2+). Glu128 functions as the Proton acceptor in the catalytic mechanism. Zn(2+)-binding residues include Glu129, Glu152, and His321.

Belongs to the peptidase M20A family. LysK subfamily. The cofactor is Zn(2+). It depends on Co(2+) as a cofactor.

It localises to the cytoplasm. The catalysed reaction is [amino-group carrier protein]-C-terminal-gamma-(L-lysyl)-L-glutamate + H2O = [amino-group carrier protein]-C-terminal-L-glutamate + L-lysine. The enzyme catalyses [amino-group carrier protein]-C-terminal-gamma-(L-ornithyl)-L-glutamate + H2O = [amino-group carrier protein]-C-terminal-L-glutamate + L-ornithine. It functions in the pathway amino-acid biosynthesis; L-lysine biosynthesis via AAA pathway; L-lysine from L-alpha-aminoadipate (Thermus route): step 5/5. Its pathway is amino-acid biosynthesis; L-arginine biosynthesis. Catalyzes the release of L-lysine from [LysW]-gamma-L-lysine and the release of L-ornithine from [LysW]-L-ornithine. The polypeptide is Putative [LysW]-lysine/[LysW]-ornithine hydrolase (Aeropyrum pernix (strain ATCC 700893 / DSM 11879 / JCM 9820 / NBRC 100138 / K1)).